Here is a 236-residue protein sequence, read N- to C-terminus: Rho-related GTP-binding protein RhoV (236 aa).

Residues 1–27 (MPPRELSEAESSPLRSPTPPPGRGSAS) form a disordered region. A Phosphoserine modification is found at S25. Residues 38–45 (GDGAVGKS), 85–89 (DTAGQ), and 143–146 (TQAD) each bind GTP. The S-palmitoyl cysteine moiety is linked to residue C234.

It belongs to the small GTPase superfamily. Rho family. As to quaternary structure, interacts with PAK2. Requires Mg(2+) as cofactor.

Its subcellular location is the cell membrane. The protein localises to the endosome membrane. Functionally, plays a role in the control of the actin cytoskeleton via activation of the JNK pathway. In Bos taurus (Bovine), this protein is Rho-related GTP-binding protein RhoV.